The following is a 665-amino-acid chain: F-box/WD repeat-containing protein lin-23 (665 aa).

An F-box domain is found at 81-127 (RDFISNLPAHLVELILFNVNSDSLKSCEEVSTSWRCALARGQHWKKL). WD repeat units follow at residues 220–257 (ENSK…CSRI), 260–299 (GHTG…KTLI), 301–337 (HCEA…DITI), 343–380 (GHRA…FVRT), 383–420 (GHRR…CLRV), 423–460 (GHEE…DPRA), and 472–509 (QHTG…PSGL). Positions 574–665 (AAAEAARGAG…VDEEMPDGGP (92 aa)) are disordered. Acidic residues-rich tracts occupy residues 584–595 (DNDESSSEEDLD) and 655–665 (DVDEEMPDGGP).

Part of a SCF (SKP1-cullin-F-box) protein ligase complex.

Its subcellular location is the cytoplasm. Functionally, functions cell autonomously to negatively regulate cell cycle progression. Required to restrain cell proliferation in response to developmental cues. Probably recognizes and binds to some proteins and promotes their ubiquitination and degradation. The polypeptide is F-box/WD repeat-containing protein lin-23 (lin-23) (Caenorhabditis elegans).